Here is a 1138-residue protein sequence, read N- to C-terminus: uncharacterized protein (1138 aa).

Disordered stretches follow at residues 985-1015 (EKKLPTHETNSEIEKEKHSDGKRKESKMAQE) and 1094-1138 (LVAT…QNKL). Positions 1110-1138 (DDDEYEKYDSGIEDIETDVDEEEEVQNKL) are enriched in acidic residues.

This is an uncharacterized protein from Ostreid herpesvirus 1 (isolate France) (OsHV-1).